Consider the following 304-residue polypeptide: Dermonecrotic toxin LiSicTox-betaIA1i (304 aa).

Residues 1–21 form the signal peptide; that stretch reads MLLPAVISFIVYAVFLQEANG. Positions 22 to 26 are excised as a propeptide; it reads HAAER. His-38 is an active-site residue. 2 residues coordinate Mg(2+): Glu-58 and Asp-60. His-74 serves as the catalytic Nucleophile. Disulfide bonds link Cys-78/Cys-84 and Cys-80/Cys-223. Residue Asp-118 participates in Mg(2+) binding.

The protein belongs to the arthropod phospholipase D family. Class II subfamily. Class IIb sub-subfamily. The cofactor is Mg(2+). Expressed by the venom gland.

Its subcellular location is the secreted. It catalyses the reaction an N-(acyl)-sphingosylphosphocholine = an N-(acyl)-sphingosyl-1,3-cyclic phosphate + choline. The catalysed reaction is an N-(acyl)-sphingosylphosphoethanolamine = an N-(acyl)-sphingosyl-1,3-cyclic phosphate + ethanolamine. It carries out the reaction a 1-acyl-sn-glycero-3-phosphocholine = a 1-acyl-sn-glycero-2,3-cyclic phosphate + choline. The enzyme catalyses a 1-acyl-sn-glycero-3-phosphoethanolamine = a 1-acyl-sn-glycero-2,3-cyclic phosphate + ethanolamine. Its function is as follows. Dermonecrotic toxins cleave the phosphodiester linkage between the phosphate and headgroup of certain phospholipids (sphingolipid and lysolipid substrates), forming an alcohol (often choline) and a cyclic phosphate. This toxin acts on sphingomyelin (SM) with low activity. It may also act on ceramide phosphoethanolamine (CPE), lysophosphatidylcholine (LPC) and lysophosphatidylethanolamine (LPE), but not on lysophosphatidylserine (LPS), and lysophosphatidylglycerol (LPG). It acts by transphosphatidylation, releasing exclusively cyclic phosphate products as second products. Induces inflammatory response but no or very weak hemolysis, dermonecrosis, vascular permeability, edema, and cytotoxicity against renal epithelial cells. Causes swelling and erythema. In vivo, is not lethal to mice when intraperitoneally injected. The sequence is that of Dermonecrotic toxin LiSicTox-betaIA1i from Loxosceles intermedia (Brown spider).